A 310-amino-acid polypeptide reads, in one-letter code: Protein-L-isoaspartate O-methyltransferase (310 aa).

Disordered regions lie at residues methionine 1 to lysine 42 and serine 64 to valine 90. Residues glutamate 14–alanine 32 are compositionally biased toward basic and acidic residues. The span at serine 64–alanine 81 shows a compositional bias: low complexity. Serine 157 is a catalytic residue.

This sequence belongs to the methyltransferase superfamily. L-isoaspartyl/D-aspartyl protein methyltransferase family.

The protein resides in the cytoplasm. It carries out the reaction [protein]-L-isoaspartate + S-adenosyl-L-methionine = [protein]-L-isoaspartate alpha-methyl ester + S-adenosyl-L-homocysteine. In terms of biological role, catalyzes the methyl esterification of L-isoaspartyl residues in peptides and proteins that result from spontaneous decomposition of normal L-aspartyl and L-asparaginyl residues. It plays a role in the repair and/or degradation of damaged proteins. The chain is Protein-L-isoaspartate O-methyltransferase from Burkholderia lata (strain ATCC 17760 / DSM 23089 / LMG 22485 / NCIMB 9086 / R18194 / 383).